We begin with the raw amino-acid sequence, 448 residues long: Glutamyl-tRNA reductase (448 aa).

Substrate contacts are provided by residues 49–52 (TCNR), serine 109, 114–116 (ETQ), and glutamine 120. Cysteine 50 (nucleophile) is an active-site residue. 189-194 (GAGETG) is a binding site for NADP(+). Positions 427–448 (PVDEVEETDATSAKAPLRALMR) are disordered.

It belongs to the glutamyl-tRNA reductase family. Homodimer.

It catalyses the reaction (S)-4-amino-5-oxopentanoate + tRNA(Glu) + NADP(+) = L-glutamyl-tRNA(Glu) + NADPH + H(+). It participates in porphyrin-containing compound metabolism; protoporphyrin-IX biosynthesis; 5-aminolevulinate from L-glutamyl-tRNA(Glu): step 1/2. In terms of biological role, catalyzes the NADPH-dependent reduction of glutamyl-tRNA(Glu) to glutamate 1-semialdehyde (GSA). The polypeptide is Glutamyl-tRNA reductase (Exiguobacterium sp. (strain ATCC BAA-1283 / AT1b)).